The primary structure comprises 583 residues: Alpha-1,3-arabinosyltransferase XAT2 (583 aa).

The Cytoplasmic segment spans residues 1 to 21 (MKPVERAKLVRSLRQESRRLR). A helical; Signal-anchor for type II membrane protein transmembrane segment spans residues 22–42 (LLVLVIGFFLVTLTFVVISKP). At 43–583 (DALLFNLNGR…LLEVLDQLNQ (541 aa)) the chain is on the lumenal side. The segment at 73–178 (RRSADTFPAA…NGKQEDGKPN (106 aa)) is disordered. Basic and acidic residues-rich tracts occupy residues 102 to 121 (TSEE…KNEE) and 135 to 146 (EDNKNGEEEGHT). Positions 149–160 (SKVTLPTVSNYT) are enriched in polar residues. A glycan (N-linked (GlcNAc...) asparagine) is linked at N158. Basic and acidic residues predominate over residues 162-178 (RDAEDTDNGKQEDGKPN). 4 N-linked (GlcNAc...) asparagine glycosylation sites follow: N229, N382, N450, and N485.

This sequence belongs to the glycosyltransferase 61 family.

It localises to the golgi apparatus membrane. The protein operates within glycan metabolism. Functionally, glycosyltransferase involved in the arabinosylation of xylan, the major hemicellulose (non-cellulosic component) of primary and secondary walls of angiosperms. Possesses alpha-1,3-arabinosyltransferase activity, transferring an arabinofuranose residue to the xylan backbone. The sequence is that of Alpha-1,3-arabinosyltransferase XAT2 from Oryza sativa subsp. japonica (Rice).